The sequence spans 307 residues: Polysialic acid O-acetyltransferase (307 aa).

The segment covering 1-90 (MLRLKTQDSR…LKTQDSRLKT (90 aa)) has biased composition (basic and acidic residues). The tract at residues 1–95 (MLRLKTQDSR…SRLKTQDSFS (95 aa)) is disordered. Repeat copies occupy residues 3–9 (RLKTQDS), 10–16 (RLKTQDS), 17–23 (RLKTQDS), 24–30 (RLKTQDS), 31–37 (RLKTQDS), 38–44 (RLKTQDS), 45–51 (RLKTQDS), 52–58 (RLKTQDS), 59–65 (RLKTQDS), 66–72 (RLKTQDS), 73–79 (RLKTQDS), 80–86 (RLKTQDS), and 87–93 (RLKTQDS). The segment at 3–93 (RLKTQDSRLK…QDSRLKTQDS (91 aa)) is 13 X 7 AA tandem repeat of RLKTQDS encoded by a 7 nucleotide repeat. Acetyl-CoA-binding positions include 208 to 210 (DGH), R237, K243, K261, and K278.

This sequence belongs to the transferase hexapeptide repeat family. As to quaternary structure, homotrimer. Hexamer formed by two homotrimers.

It catalyses the reaction [N-acetyl-alpha-D-neuraminosyl-(2-&gt;8)](n) + n acetyl-CoA = [N,O(9)-diacetyl-alpha-D-neuraminosyl-(2-&gt;8)](n) + n CoA. The enzyme catalyses [N-acetyl-alpha-D-neuraminosyl-(2-&gt;8)](n) + n acetyl-CoA = [O(7),N-diacetyl-alpha-D-neuraminosyl-(2-&gt;8)](n) + n CoA. Catalyzes the O-acetylation of capsular polymeric sialic acid. Shows high substrate specificity toward polymers of sialic acid that contains a large number of residues. This is Polysialic acid O-acetyltransferase from Escherichia coli O1:K1 / APEC.